We begin with the raw amino-acid sequence, 807 residues long: AP-5 complex subunit zeta-1 (807 aa).

As to quaternary structure, probably part of the adaptor protein complex 5 (AP-5) a tetramer composed of AP5B1, AP5M1, AP5S1 and AP5Z1. Interacts with ZFYVE26 and SPG11.

It is found in the cytoplasm. The protein resides in the nucleus. In terms of biological role, as part of AP-5, a probable fifth adaptor protein complex it may be involved in endosomal transport. This Mus musculus (Mouse) protein is AP-5 complex subunit zeta-1 (Ap5z1).